The primary structure comprises 354 residues: MASSSSATSGDDRPPAAGGGTPAQAHAEWAASMHAYYAAAASAAGHPYAAWPLPPQAQQHGLVAAGAGAAYGAGAVPHVPPPPAGTRHAHASMAAGVPYMAGESASAAGKGKRVGKTQRVPSGEINSSSGSGDAGSQGSSEKGDAGANQKGSSSSAKRRKSGAAKTEGEPSQAATVQNAVTEPPLEDKERSASKLLVLAPGRAALTSAAPNLNIGMDPLSASPSSLVQGEVNAAASSQSNASLSQMDERELKRERRKQSNRESARRSRLRKQQECEELAQKVSELTAANGTLRSELDQLKKDCKTMETENKKLMGKILSHDDKMQQSEGPSVVTTLSIQVEAPEPHQGGHGKAS.

Disordered regions lie at residues 1–24, 106–193, and 230–273; these read MASSSSATSGDDRPPAAGGGTPAQ, SAAG…RSAS, and EVNA…RKQQ. Low complexity-rich tracts occupy residues 127-140 and 232-245; these read SSSGSGDAGSQGSS and NAAASSQSNASLSQ. A compositionally biased stretch (basic and acidic residues) spans 246–265; that stretch reads MDERELKRERRKQSNRESAR. Residues 250-313 form the bZIP domain; sequence ELKRERRKQS…KTMETENKKL (64 aa). The tract at residues 252 to 271 is basic motif; it reads KRERRKQSNRESARRSRLRK. Positions 278 to 299 are leucine-zipper; it reads LAQKVSELTAANGTLRSELDQL.

It belongs to the bZIP family. As to quaternary structure, heterodimer.

The protein localises to the nucleus. In terms of biological role, interacts specifically with the 8-bp sequence 5'-CACGTGGC-3'in the abscisic acid response element (ABARE). Also binds to the hexamer motif 5'-ACGTCA-3' of histone gene promoters. This Triticum aestivum (Wheat) protein is DNA-binding protein EMBP-1.